We begin with the raw amino-acid sequence, 132 residues long: DNA-directed RNA polymerase subunit Rpo8 (132 aa).

It belongs to the archaeal Rpo8 RNA polymerase subunit family. Part of the 13-subunit RNA polymerase complex.

The protein resides in the cytoplasm. The catalysed reaction is RNA(n) + a ribonucleoside 5'-triphosphate = RNA(n+1) + diphosphate. DNA-dependent RNA polymerase (RNAP) catalyzes the transcription of DNA into RNA using the four ribonucleoside triphosphates as substrates. This chain is DNA-directed RNA polymerase subunit Rpo8, found in Saccharolobus solfataricus (strain ATCC 35092 / DSM 1617 / JCM 11322 / P2) (Sulfolobus solfataricus).